Consider the following 193-residue polypeptide: Auxin-responsive protein IAA23 (193 aa).

The span at 1–12 (MSTSSGADSSPP) shows a compositional bias: polar residues. A disordered region spans residues 1-66 (MSTSSGADSS…SPKARAVGWP (66 aa)). A compositionally biased stretch (low complexity) spans 21–36 (TALTLALPGSSSSSSS). Positions 23-27 (LTLAL) match the EAR-like (transcriptional repression) motif. Residues 39–53 (DPERKRAAHADHADA) show a composition bias toward basic and acidic residues. In terms of domain architecture, PB1 spans 83 to 191 (AKLVKVAVDG…EAVNLSPRRS (109 aa)).

The protein belongs to the Aux/IAA family. In terms of assembly, homodimers and heterodimers. Highly expressed in roots. Expressed in seedlings.

The protein localises to the nucleus. In terms of biological role, aux/IAA proteins are short-lived transcriptional factors that function as repressors of early auxin response genes at low auxin concentrations. In Oryza sativa subsp. japonica (Rice), this protein is Auxin-responsive protein IAA23 (IAA23).